We begin with the raw amino-acid sequence, 82 residues long: Small ribosomal subunit protein bS18 (82 aa).

Residues Met-1 to Cys-20 are disordered.

Belongs to the bacterial ribosomal protein bS18 family. In terms of assembly, part of the 30S ribosomal subunit. Forms a tight heterodimer with protein bS6.

Binds as a heterodimer with protein bS6 to the central domain of the 16S rRNA, where it helps stabilize the platform of the 30S subunit. The protein is Small ribosomal subunit protein bS18 of Bartonella quintana (strain Toulouse) (Rochalimaea quintana).